Consider the following 526-residue polypeptide: MDFSSTVASQLYTGAILPESIVILTLIVVLVGDLIVGRARSGWIPYAAIAGLLGSVFALYLGWDNPHPVAFLGAFNSDNLSILFRGIIVLSTAFTIMMSVRYVERSGTALSEFICILLTATLGGMFLSGANELVMIFVSLEMLSISSYLLTGYMKRDPRSNEAALKYLLIGAASSAIFLYGVSLLYGLSGGKTILSEIALGFTDPQGGQSLALAIALVFAIAGIAFKISAVPFHQWTPDVYEGSPTPVVAFLSVGSKAAGFALAIRLLVTVFNPVSEEWHFIFTALAILSMVLGNVVALAQTSMKRMLAYSSIAQAGFVMIGLVAGTDAGYSSVIFYLLVYLFMNLGAFTCVILFSLRTGTDQIAEYAGLYQKDPLLTLGLSVCLLSLGGIPPLAGFFGKIYLFWAGWQAGLYGLVLLGLITSVISIYYYIRVIKMMVVKEPQEMSDSVRNYPAVTWTAVGMKPLQVGLVLSVIITSLAGILSNPLFVIADQSVTSTPMLQVANHPTEQVVAQVDSELVGVAIADH.

Helical transmembrane passes span 16 to 36 (ILPESIVILTLIVVLVGDLIV), 43 to 63 (WIPYAAIAGLLGSVFALYLGW), 80 to 100 (LSILFRGIIVLSTAFTIMMSV), 107 to 127 (GTALSEFICILLTATLGGMFL), 133 to 153 (LVMIFVSLEMLSISSYLLTGY), 168 to 188 (LLIGAASSAIFLYGVSLLYGL), 211 to 231 (LALAIALVFAIAGIAFKISAV), 245 to 265 (PTPVVAFLSVGSKAAGFALAI), 279 to 299 (WHFIFTALAILSMVLGNVVAL), 307 to 327 (MLAYSSIAQAGFVMIGLVAGT), 335 to 355 (IFYLLVYLFMNLGAFTCVILF), 379 to 399 (LGLSVCLLSLGGIPPLAGFFG), 401 to 421 (IYLFWAGWQAGLYGLVLLGLI), and 469 to 489 (LVLSVIITSLAGILSNPLFVI).

The protein belongs to the complex I subunit 2 family. In terms of assembly, NDH-1 can be composed of about 15 different subunits; different subcomplexes with different compositions have been identified which probably have different functions.

The protein localises to the cellular thylakoid membrane. It catalyses the reaction a plastoquinone + NADH + (n+1) H(+)(in) = a plastoquinol + NAD(+) + n H(+)(out). It carries out the reaction a plastoquinone + NADPH + (n+1) H(+)(in) = a plastoquinol + NADP(+) + n H(+)(out). Functionally, NDH-1 shuttles electrons from an unknown electron donor, via FMN and iron-sulfur (Fe-S) centers, to quinones in the respiratory and/or the photosynthetic chain. The immediate electron acceptor for the enzyme in this species is believed to be plastoquinone. Couples the redox reaction to proton translocation, and thus conserves the redox energy in a proton gradient. Cyanobacterial NDH-1 also plays a role in inorganic carbon-concentration. The polypeptide is NAD(P)H-quinone oxidoreductase subunit 2 (Picosynechococcus sp. (strain ATCC 27264 / PCC 7002 / PR-6) (Agmenellum quadruplicatum)).